A 354-amino-acid polypeptide reads, in one-letter code: Rhodopsin (354 aa).

The Extracellular segment spans residues 1 to 36 (MNGTEGENFYVPMSNKTGVVRSPFDYPQYYLGEPWM). N-linked (GlcNAc...) asparagine glycans are attached at residues Asn-2 and Asn-15. The helical transmembrane segment at 37 to 61 (FSALAAYMFFLILTGLPVNFLTLFV) threads the bilayer. At 62–73 (TIQHKKLRQPLN) the chain is on the cytoplasmic side. Residues 74–96 (YILLNLAVSDLFMVFGGFTTTII) form a helical membrane-spanning segment. The Extracellular segment spans residues 97–110 (TSMNGYFIFGPAGC). Cys-110 and Cys-187 are disulfide-bonded. A helical membrane pass occupies residues 111–133 (NFEGFFATLGGEVGLWCLVVLAI). Residues 134-136 (ERY) carry the 'Ionic lock' involved in activated form stabilization motif. The Cytoplasmic portion of the chain corresponds to 134–152 (ERYMVVCKPMANFRFGSQH). The helical transmembrane segment at 153–173 (AIIGVVFTWIMALSCAGPPLV) threads the bilayer. Over 174–202 (GWSRYIPEGLQCSCGVDYYTMKPEVNNES) the chain is Extracellular. A helical membrane pass occupies residues 203 to 224 (FVIYMFVVHFTIPLIVIFFCYG). At 225 to 252 (RLVCTVKEAAAQQQESESTQRAEREVTR) the chain is on the cytoplasmic side. Residues 253 to 274 (MVIIMVVAFLICWVPYASVAFY) form a helical membrane-spanning segment. Over 275-286 (IFINQGCDFTPF) the chain is Extracellular. A helical transmembrane segment spans residues 287–308 (FMTVPAFFAKSSAVYNPLIYIL). Residue Lys-296 is modified to N6-(retinylidene)lysine. The Cytoplasmic segment spans residues 309–354 (MNKQFRNCMITTICLGKNPFEEEESTSASASKTEASSVSSSQVAPA). Residue Cys-322 is the site of S-palmitoyl cysteine attachment. The segment at 333-354 (STSASASKTEASSVSSSQVAPA) is disordered. Residues 334 to 354 (TSASASKTEASSVSSSQVAPA) show a composition bias toward low complexity.

Belongs to the G-protein coupled receptor 1 family. Opsin subfamily. In terms of processing, phosphorylated on some or all of the serine and threonine residues present in the C-terminal region. Post-translationally, contains one covalently linked retinal chromophore.

Its subcellular location is the membrane. The protein localises to the cell projection. It localises to the cilium. The protein resides in the photoreceptor outer segment. Photoreceptor required for image-forming vision at low light intensity. While most salt water fish species use retinal as chromophore, most freshwater fish use 3-dehydroretinal, or a mixture of retinal and 3-dehydroretinal. Light-induced isomerization of 11-cis to all-trans retinal triggers a conformational change that activates signaling via G-proteins. Subsequent receptor phosphorylation mediates displacement of the bound G-protein alpha subunit by arrestin and terminates signaling. This chain is Rhodopsin (rho), found in Leucoraja erinaceus (Little skate).